Here is a 147-residue protein sequence, read N- to C-terminus: Large ribosomal subunit protein uL13 (147 aa).

It belongs to the universal ribosomal protein uL13 family. In terms of assembly, part of the 50S ribosomal subunit.

Its function is as follows. This protein is one of the early assembly proteins of the 50S ribosomal subunit, although it is not seen to bind rRNA by itself. It is important during the early stages of 50S assembly. This is Large ribosomal subunit protein uL13 from Streptomyces griseus subsp. griseus (strain JCM 4626 / CBS 651.72 / NBRC 13350 / KCC S-0626 / ISP 5235).